Consider the following 801-residue polypeptide: Phenylalanine--tRNA ligase beta subunit (801 aa).

The 115-residue stretch at 39–153 (AAGLSKIVVG…EDAVPGEEVF (115 aa)) folds into the tRNA-binding domain. One can recognise a B5 domain in the interval 406–481 (TSDVEVSSTL…RIYGYDRLPT (76 aa)). 4 residues coordinate Mg(2+): Asp459, Asp465, Glu468, and Glu469. One can recognise an FDX-ACB domain in the interval 708 to 801 (TKFPAVSRDV…LEEKVNAEVR (94 aa)).

The protein belongs to the phenylalanyl-tRNA synthetase beta subunit family. Type 1 subfamily. Tetramer of two alpha and two beta subunits. Requires Mg(2+) as cofactor.

It is found in the cytoplasm. The catalysed reaction is tRNA(Phe) + L-phenylalanine + ATP = L-phenylalanyl-tRNA(Phe) + AMP + diphosphate + H(+). This Streptococcus pneumoniae serotype 4 (strain ATCC BAA-334 / TIGR4) protein is Phenylalanine--tRNA ligase beta subunit.